Reading from the N-terminus, the 351-residue chain is Ferrochelatase (351 aa).

The Fe cation site is built by His-220 and Glu-301.

It belongs to the ferrochelatase family.

The protein resides in the cytoplasm. The enzyme catalyses heme b + 2 H(+) = protoporphyrin IX + Fe(2+). It participates in porphyrin-containing compound metabolism; protoheme biosynthesis; protoheme from protoporphyrin-IX: step 1/1. In terms of biological role, catalyzes the ferrous insertion into protoporphyrin IX. This Rhodobacter capsulatus (Rhodopseudomonas capsulata) protein is Ferrochelatase.